Reading from the N-terminus, the 413-residue chain is MMMLRIRSRDGLERVTAEGAHITVSQLKTLIADQLQIPLHKQTLSTNRDLLLAKTPADLLAFTDLTDPNLPLSSLNLGHGSMLYLAYDGERSIPGAPPVTPAGSFGRKMTVDDLIARQMRVTRQETSHCDSVSFDRDAANAFQHYVNESLAFAVKRGGFMYGTVTEEGQVEVDFIYEPPQQGTEANLILMRDADEEKRVDAIAMGLGMRRVGFIFNQTVVQDKTEYTLSNAEVLQAAELHAESELKEWVTAVVKLEVNEDGGADVHFEAFQMSDMCIRLFKEEWFETEIMPDDDPKLSKMKKEVVVGVKDLKEVDNDFFLVLVRILDHQGPLSSTFPIENRSSRATMRALKTHLDRAKSLPLVKKMSDFHLLLFVAQFLDVSSDVPALAECVRLQSPVPEGYALLIESMANTC.

S104 carries the phosphoserine modification. One can recognise an MPN domain in the interval 131-272; sequence SVSFDRDAAN…ADVHFEAFQM (142 aa).

It belongs to the NPL4 family.

It participates in protein degradation; proteasomal ubiquitin-dependent pathway. May be part of a complex that binds ubiquitinated proteins and that is necessary for the export of misfolded proteins from the ER to the cytoplasm, where they are degraded by the proteasome. The chain is NPL4-like protein 2 from Arabidopsis thaliana (Mouse-ear cress).